The following is a 341-amino-acid chain: HTH-type transcriptional repressor PurR (341 aa).

One can recognise an HTH lacI-type domain in the interval 2–56 (ATIKDVAKRAGVSTTTVSHVINKTRFVAENTRAAVWAAIKELNYSPSAVARSLKV). A DNA-binding region (H-T-H motif) is located at residues 4 to 23 (IKDVAKRAGVSTTTVSHVIN). A DNA-binding region spans residues 48 to 56 (SAVARSLKV). Tyrosine 73, arginine 190, threonine 192, phenylalanine 221, and aspartate 275 together coordinate hypoxanthine.

Homodimer.

The protein operates within purine metabolism; purine nucleotide biosynthesis [regulation]. Its function is as follows. Is the main repressor of the genes involved in the de novo synthesis of purine nucleotides, regulating purB, purC, purEK, purF, purHD, purL, purMN and guaBA expression. PurR is allosterically activated to bind its cognate DNA by binding the purine corepressors, hypoxanthine or guanine, thereby effecting transcription repression. The polypeptide is HTH-type transcriptional repressor PurR (Proteus mirabilis (strain HI4320)).